A 277-amino-acid chain; its full sequence is Protein CUSTOS (277 aa).

3 disordered regions span residues 1–81, 108–182, and 238–277; these read MVAP…QTTP, TQQA…QRCR, and SVNGDPVLSGTKKKKKKKAKKAREASLCPPAECAAAEPKN. A compositionally biased stretch (low complexity) spans 9 to 18; sequence SDSESSSSDS. Ser62 is modified (phosphoserine). Residues 63–72 are compositionally biased toward basic and acidic residues; that stretch reads RRREVNQHDE. A Phosphothreonine modification is found at Thr80. Residues 106-141 are a coiled coil; sequence KKTQQARLQQEAKEQQEAKEQQAAKEEQAAKKEEDG. Over residues 115-142 the composition is skewed to basic and acidic residues; that stretch reads QEAKEQQEAKEQQAAKEEQAAKKEEDGF. A phosphoserine mark is found at Ser158 and Ser238. Over residues 248-258 the composition is skewed to basic residues; the sequence is TKKKKKKKAKK. The Nucleolar localization signal (NLS) motif lies at 249–256; the sequence is KKKKKKKA. A compositionally biased stretch (low complexity) spans 265 to 277; sequence CPPAECAAAEPKN.

The protein belongs to the CUSTOS family.

It localises to the nucleus envelope. Functionally, plays a role in the regulation of Wnt signaling pathway during early development. This is Protein CUSTOS from Rattus norvegicus (Rat).